A 59-amino-acid chain; its full sequence is Large ribosomal subunit protein bL32 (59 aa).

Residues 1–59 (MAVQQNRKTPSKRGMRRSHDALSGPALSVEPQTGETHRRHHVSPDGYYRGRKVMQGRED) form a disordered region. Residues 49–59 (RGRKVMQGRED) show a composition bias toward basic residues.

It belongs to the bacterial ribosomal protein bL32 family.

The chain is Large ribosomal subunit protein bL32 from Alkalilimnicola ehrlichii (strain ATCC BAA-1101 / DSM 17681 / MLHE-1).